Here is a 551-residue protein sequence, read N- to C-terminus: Nucleobase-ascorbate transporter 3 (551 aa).

Residues 1 to 30 are disordered; it reads MVETGHHHQHPPAPAAAGHPPVPSMAMARN. A run of 12 helical transmembrane segments spans residues 56-76, 92-111, 117-136, 158-178, 179-199, 202-222, 242-262, 306-326, 390-410, 412-432, 442-462, and 481-501; these read ETVV…VLIA, RVIQ…QTLI, TVMG…IRDY, SLII…WGNL, IRIF…LGLF, GFPL…LLII, ALLV…VSGA, VFGM…VFFA, FFMI…SIPL, IFAG…ISFI, NMYV…YFLA, and DILN…ATIL.

Belongs to the nucleobase:cation symporter-2 (NCS2) (TC 2.A.40) family. Expressed in the apical meristem 4 days after imbibition (DAI). Expressed in the major veins of rosette leaves and pedicels. Expressed in the root central cylinder, root meristems, root tips and lateral root primordia.

The protein localises to the membrane. The polypeptide is Nucleobase-ascorbate transporter 3 (NAT3) (Arabidopsis thaliana (Mouse-ear cress)).